Consider the following 262-residue polypeptide: Type III pantothenate kinase (262 aa).

ATP is bound at residue 9–16; the sequence is DIGNTNIV. Residues Y103 and 110-113 contribute to the substrate site; that span reads GVDR. D112 acts as the Proton acceptor in catalysis. Residue D132 participates in K(+) binding. T135 serves as a coordination point for ATP. T187 lines the substrate pocket.

The protein belongs to the type III pantothenate kinase family. In terms of assembly, homodimer. The cofactor is NH4(+). K(+) serves as cofactor.

The protein localises to the cytoplasm. The enzyme catalyses (R)-pantothenate + ATP = (R)-4'-phosphopantothenate + ADP + H(+). It participates in cofactor biosynthesis; coenzyme A biosynthesis; CoA from (R)-pantothenate: step 1/5. Its function is as follows. Catalyzes the phosphorylation of pantothenate (Pan), the first step in CoA biosynthesis. This is Type III pantothenate kinase from Finegoldia magna (strain ATCC 29328 / DSM 20472 / WAL 2508) (Peptostreptococcus magnus).